A 600-amino-acid polypeptide reads, in one-letter code: ATP-dependent lipid A-core flippase (600 aa).

The next 4 helical transmembrane spans lie at 27–47, 83–103, 174–194, and 267–287; these read ISLF…QPML, LLII…NYFL, LLFM…LIAV, and PLLQ…VLYL. The 292-residue stretch at 31-322 folds into the ABC transmembrane type-1 domain; the sequence is LISIVGFLIF…LSEVSSTIQK (292 aa). An ABC transporter domain is found at 354 to 590; that stretch reads LDVRNLSFTY…NGYYARLNAM (237 aa). 388-395 provides a ligand contact to ATP; it reads GRSGSGKS.

Belongs to the ABC transporter superfamily. Lipid exporter (TC 3.A.1.106) family. Homodimer.

The protein resides in the cell inner membrane. It catalyses the reaction ATP + H2O + lipid A-core oligosaccharideSide 1 = ADP + phosphate + lipid A-core oligosaccharideSide 2.. Its function is as follows. Involved in lipopolysaccharide (LPS) biosynthesis. Translocates lipid A-core from the inner to the outer leaflet of the inner membrane. Transmembrane domains (TMD) form a pore in the inner membrane and the ATP-binding domain (NBD) is responsible for energy generation. The protein is ATP-dependent lipid A-core flippase of Pseudomonas fluorescens (strain Pf0-1).